The sequence spans 156 residues: uncharacterized protein (156 aa).

This is an uncharacterized protein from Schizosaccharomyces pombe (strain 972 / ATCC 24843) (Fission yeast).